A 354-amino-acid chain; its full sequence is cAMP-dependent protein kinase catalytic subunit 2 (354 aa).

In terms of domain architecture, Protein kinase spans Tyr-45–Phe-301. Residues Leu-51–Val-59 and Lys-74 each bind ATP. Residue Asp-168 is the Proton acceptor of the active site. One can recognise an AGC-kinase C-terminal domain in the interval Gln-302–Phe-354.

It belongs to the protein kinase superfamily. AGC Ser/Thr protein kinase family. cAMP subfamily. As to expression, more abundant in adult body than adult head.

The catalysed reaction is L-seryl-[protein] + ATP = O-phospho-L-seryl-[protein] + ADP + H(+). It carries out the reaction L-threonyl-[protein] + ATP = O-phospho-L-threonyl-[protein] + ADP + H(+). The chain is cAMP-dependent protein kinase catalytic subunit 2 (Pka-C2) from Drosophila melanogaster (Fruit fly).